Here is a 210-residue protein sequence, read N- to C-terminus: ER membrane protein complex subunit 8 (210 aa).

Positions V4–R150 constitute an MPN domain.

The protein belongs to the EMC8/EMC9 family. Component of the ER membrane protein complex (EMC). EMC8 and EMC9 are mutually exclusive subunits of the EMC complex. Expressed in liver, pancreas, heart, lung, kidney, brain, skeletal muscle, and placenta. Expression levels are highest in pancreas and moderate in heart, skeletal muscle, and placenta.

The protein localises to the endoplasmic reticulum membrane. Its function is as follows. Part of the endoplasmic reticulum membrane protein complex (EMC) that enables the energy-independent insertion into endoplasmic reticulum membranes of newly synthesized membrane proteins. Preferentially accommodates proteins with transmembrane domains that are weakly hydrophobic or contain destabilizing features such as charged and aromatic residues. Involved in the cotranslational insertion of multi-pass membrane proteins in which stop-transfer membrane-anchor sequences become ER membrane spanning helices. It is also required for the post-translational insertion of tail-anchored/TA proteins in endoplasmic reticulum membranes. By mediating the proper cotranslational insertion of N-terminal transmembrane domains in an N-exo topology, with translocated N-terminus in the lumen of the ER, controls the topology of multi-pass membrane proteins like the G protein-coupled receptors. By regulating the insertion of various proteins in membranes, it is indirectly involved in many cellular processes. In Homo sapiens (Human), this protein is ER membrane protein complex subunit 8 (EMC8).